The primary structure comprises 139 residues: Serpin-like protein HMSD (139 aa).

The N-terminal stretch at 1-20 (MSISSALAMVFMGAKGNTAA) is a signal peptide. An N-linked (GlcNAc...) asparagine glycan is attached at asparagine 50.

It belongs to the serpin family. Highly expressed in dendritic cells and primary leukemia cells, especially those of myeloid lineage.

It is found in the secreted. Its function is as follows. Putative serine protease inhibitor. This is Serpin-like protein HMSD (HMSD) from Homo sapiens (Human).